The following is a 78-amino-acid chain: MSRVCQVTGKRPMVGNNRSHAKNATRRRFLPNLQNHRFWLENEKRFVQLRISTKGMRIIDKKGIEVVIAELRARGEKV.

Residues 1–21 (MSRVCQVTGKRPMVGNNRSHA) are disordered.

The protein belongs to the bacterial ribosomal protein bL28 family.

The sequence is that of Large ribosomal subunit protein bL28 from Shewanella halifaxensis (strain HAW-EB4).